The primary structure comprises 568 residues: Proline--tRNA ligase (568 aa).

Belongs to the class-II aminoacyl-tRNA synthetase family. ProS type 1 subfamily. In terms of assembly, homodimer.

It localises to the cytoplasm. The catalysed reaction is tRNA(Pro) + L-proline + ATP = L-prolyl-tRNA(Pro) + AMP + diphosphate. In terms of biological role, catalyzes the attachment of proline to tRNA(Pro) in a two-step reaction: proline is first activated by ATP to form Pro-AMP and then transferred to the acceptor end of tRNA(Pro). As ProRS can inadvertently accommodate and process non-cognate amino acids such as alanine and cysteine, to avoid such errors it has two additional distinct editing activities against alanine. One activity is designated as 'pretransfer' editing and involves the tRNA(Pro)-independent hydrolysis of activated Ala-AMP. The other activity is designated 'posttransfer' editing and involves deacylation of mischarged Ala-tRNA(Pro). The misacylated Cys-tRNA(Pro) is not edited by ProRS. This Listeria welshimeri serovar 6b (strain ATCC 35897 / DSM 20650 / CCUG 15529 / CIP 8149 / NCTC 11857 / SLCC 5334 / V8) protein is Proline--tRNA ligase.